The sequence spans 216 residues: Somatotropin (216 aa).

The signal sequence occupies residues Met-1 to Ala-26. His-45 is a Zn(2+) binding site. The cysteines at positions 78 and 189 are disulfide-linked. Ser-131 carries the phosphoserine modification. Glu-198 serves as a coordination point for Zn(2+). A disulfide bond links Cys-206 and Cys-214.

This sequence belongs to the somatotropin/prolactin family.

The protein localises to the secreted. Its function is as follows. Plays an important role in growth control. Its major role in stimulating body growth is to stimulate the liver and other tissues to secrete IGF1. It stimulates both the differentiation and proliferation of myoblasts. It also stimulates amino acid uptake and protein synthesis in muscle and other tissues. The sequence is that of Somatotropin (GH1) from Spalax ehrenbergi (Middle East blind mole rat).